The chain runs to 88 residues: Actobindin (88 aa).

Met1 bears the N-acetylmethionine mark. The interval 1–22 is disordered; that stretch reads MNPELQSAIGQGAALKHAETVD. Residue Lys35 is modified to N6,N6,N6-trimethyllysine. Positions 37-54 constitute a WH2 domain; the sequence is DRSSFLEEVAKPHELKHA. The residue at position 72 (Lys72) is an N6,N6,N6-trimethyllysine.

In terms of assembly, monomer.

Is able to bind two actin monomers at high concentrations of G-actin. The polypeptide is Actobindin (Acanthamoeba castellanii (Amoeba)).